The following is a 394-amino-acid chain: Elongation factor Tu (394 aa).

The tr-type G domain occupies 10–204 (KPHVNVGTIG…HLDTYIPEPE (195 aa)). Positions 19 to 26 (GHVDHGKT) are G1. 19–26 (GHVDHGKT) is a GTP binding site. A Mg(2+)-binding site is contributed by Thr26. Residues 60–64 (GITIN) form a G2 region. The tract at residues 81 to 84 (DCPG) is G3. GTP-binding positions include 81–85 (DCPGH) and 136–139 (NKCD). Residues 136 to 139 (NKCD) are G4. Residues 174 to 176 (SAL) are G5.

Belongs to the TRAFAC class translation factor GTPase superfamily. Classic translation factor GTPase family. EF-Tu/EF-1A subfamily. In terms of assembly, monomer.

Its subcellular location is the cytoplasm. The enzyme catalyses GTP + H2O = GDP + phosphate + H(+). In terms of biological role, GTP hydrolase that promotes the GTP-dependent binding of aminoacyl-tRNA to the A-site of ribosomes during protein biosynthesis. This chain is Elongation factor Tu, found in Klebsiella pneumoniae subsp. pneumoniae (strain ATCC 700721 / MGH 78578).